Consider the following 178-residue polypeptide: Adenine phosphoribosyltransferase (178 aa).

It belongs to the purine/pyrimidine phosphoribosyltransferase family. Homodimer.

Its subcellular location is the cytoplasm. The enzyme catalyses AMP + diphosphate = 5-phospho-alpha-D-ribose 1-diphosphate + adenine. Its pathway is purine metabolism; AMP biosynthesis via salvage pathway; AMP from adenine: step 1/1. Functionally, catalyzes a salvage reaction resulting in the formation of AMP, that is energically less costly than de novo synthesis. This Cereibacter sphaeroides (strain ATCC 17023 / DSM 158 / JCM 6121 / CCUG 31486 / LMG 2827 / NBRC 12203 / NCIMB 8253 / ATH 2.4.1.) (Rhodobacter sphaeroides) protein is Adenine phosphoribosyltransferase.